We begin with the raw amino-acid sequence, 357 residues long: MGCIMSQEDEAAKRRSKKIDRLLKEDGENSMRTIKLLLLGAGESGKSTILKQMRIIHDVGYTTEERKVFRGVVYGNIILSLNAIIHAMEQLKISFTTLDHESDARKLLMFSTTGEEDELPEELVVLMKSVWSDSGIQKALERSREYQLNDSAGYYLSQLDRICAPNYIPTQDDILRTRIKTTGIVETQFVYKDRLFLVFDVGGQRSERKKWIHCFEDVTALIFCVALSEYDMVLVEDCQTNRMRESLKLFDSICNNKWFVETSIILFLNKKDLFEEKIVRSPLTHCFPEYTGANNYEEASAYIQQQFEDMNKRTTGEKNQEIYTQFTCATDTNNIRFVFDAVTDIIIRDNLRTCGLY.

Gly2 carries the N-myristoyl glycine lipid modification. Cys3 is lipidated: S-palmitoyl cysteine. The 326-residue stretch at 32-357 (RTIKLLLLGA…RDNLRTCGLY (326 aa)) folds into the G-alpha domain. Residues 35–48 (KLLLLGAGESGKST) are G1 motif. Residues 40–47 (GAGESGKS), 175–181 (LRTRIKT), 200–204 (DVGGQ), 269–272 (NKKD), and Ala329 each bind GTP. The Mg(2+) site is built by Ser47 and Thr181. The interval 173–181 (DILRTRIKT) is G2 motif. The segment at 196-205 (FLVFDVGGQR) is G3 motif. The G4 motif stretch occupies residues 265–272 (ILFLNKKD). The segment at 327 to 332 (TCATDT) is G5 motif.

It belongs to the G-alpha family. G proteins are composed of 3 units; alpha, beta and gamma. The alpha chain contains the guanine nucleotide binding site.

Its function is as follows. Guanine nucleotide-binding proteins (G proteins) are involved as modulators or transducers in various transmembrane signaling systems. In the 1-cell embryo, probably together with goa-1, controls nuclear rotation and spindle elongation during mitosis. During the first embryonic cell divisons, plays a role in gpr-1/2 cortical localization and in the proper orientation of EMS blastomere mitotic spindle. The sequence is that of Guanine nucleotide-binding protein alpha-16 subunit (gpa-16) from Caenorhabditis elegans.